The chain runs to 176 residues: MGVPATRRCVEWLLGIYFLSHIPITLFMDLQAVLPRELYPVEFRNLLKWYAKEFKDPLLQEPPAWFKSFLFCELVFQLPFFPIATYAFLKGSCKWIRTPAIIYSVHTMTTLIPILSTFLFEDFSKASGFKGQRPETLHERLTLISVYAPYLLIPFILLIFMLRSPYYKYEEKRKKK.

At Met-1–Cys-9 the chain is on the cytoplasmic side. The helical transmembrane segment at Val-10–Leu-30 threads the bilayer. An EXPERA domain is found at Val-10–Leu-158. The Lumenal segment spans residues Gln-31–Ser-68. A helical membrane pass occupies residues Phe-69–Leu-89. The cholesterol site is built by Val-75 and Gln-77. Residues Lys-90–Pro-99 are Cytoplasmic-facing. The chain crosses the membrane as a helical span at residues Ala-100 to Phe-120. Residues Glu-121 to Arg-140 are Lumenal-facing. The helical transmembrane segment at Leu-141–Met-161 threads the bilayer. Over Leu-162–Lys-176 the chain is Cytoplasmic. Positions Lys-172–Lys-176 match the ER retention motif motif.

Belongs to the TMEM97/sigma-2 receptor family. In terms of assembly, homodimer. Interacts with NPC1; the interaction impairs NPC1-mediated cholesterol transport. Interacts with PGRMC1 and LDLR; the interaction increases LDL internalization. Interacts with histatin 1/HTN1; the interaction induces HTN1-stimulating wound healing. Interacts with TSPO.

It localises to the rough endoplasmic reticulum membrane. It is found in the nucleus membrane. Its function is as follows. Sigma-2 receptor which contributes to ameliorate dysfunctional cellular processes and slow degenerative progression by regulating cell functions including cholesterol biosynthesis/trafficking, membrane trafficking, autophagy, lipid membrane-bound protein trafficking, and receptor stabilization at the cell surface. Forms a ternary complex with PGRMC1 receptor and low density lipoprotein receptor/LDLR at the plasma membrane, which increases LDLR-mediated LDL cholesterol internalization. Decreases lysosomal sterol transporter NPC1 availability to the cell, probably through NPC1-binding, hence controlling lipid transport, including cholesterol and LBPA, outside of late endosome/lysosome. Binds regio- and stereoselective ligand 20(S)-hydroxycholesterol (20(S)-OHC) which enhances TMEM97-NPC1 interaction and decreases TMEM97-PGRMC1 and TMEM97-TSPO interactions, thereby linking OHC binding to cholesterol homeostasis. Also able to bind cholesterol. Binds histatin 1 (Hst 1)/HN1 salivary peptide at the ER membrane, which is critical for increasing mitochondria-ER contacts and stimulating Hst1 wound healing properties. May alter the activity of some cytochrome P450 proteins. Although shows homologies with sterol isomerases (EXPERA domain), not able to catalyze sterol isomerization. However, may act as sensors of these molecules. Acts as a quality control factor in the ER, promoting the proteolytic degradation of nonproductive and extramitochondrial precursor proteins in the ER membrane thus removing them from the ER surface. The sequence is that of Sigma intracellular receptor 2 (Tmem97) from Macaca fascicularis (Crab-eating macaque).